Here is a 132-residue protein sequence, read N- to C-terminus: Intraflagellar transport protein 20 homolog B (132 aa).

The stretch at 87-112 (EAQQQQLYALIAEKKMQLERYRIEYD) forms a coiled coil.

The protein resides in the golgi apparatus. It localises to the cis-Golgi network. The protein localises to the cytoplasm. It is found in the cytoskeleton. Its subcellular location is the microtubule organizing center. The protein resides in the centrosome. It localises to the centriole. The protein localises to the cell projection. It is found in the cilium. Involved in ciliary process assembly. May play a role in the trafficking of ciliary membrane proteins from the Golgi complex to the cilium. Regulates the platelet-derived growth factor receptor-alpha (PDGFRA) signaling pathway. Plays an important role in spermatogenesis, particularly spermiogenesis, when germ cells form flagella. The chain is Intraflagellar transport protein 20 homolog B (ift20-b) from Xenopus laevis (African clawed frog).